We begin with the raw amino-acid sequence, 736 residues long: Centrosomal protein kizuna (736 aa).

Residues 10-35 (HRAMKLQRNLRHCEGKRLELERELFQ) are a coiled coil. A compositionally biased stretch (polar residues) spans 192–208 (NTSFQLSQKMPVTSVAS). Disordered stretches follow at residues 192–238 (NTSF…SAQL), 279–305 (SFTHANPSGASPDACDYINNQTSDKHS), 323–348 (EDKQCLDSSSDLTVSISESEDDSYPP), and 642–690 (TVEE…NMST). Positions 210 to 219 (EDGRTHRAQI) are enriched in basic and acidic residues. A compositionally biased stretch (polar residues) spans 328–339 (LDSSSDLTVSIS). Low complexity predominate over residues 658 to 668 (SETSFSSSEKS). Over residues 678–690 (IQPNYMKSNNMST) the composition is skewed to polar residues.

Belongs to the kizuna family.

Its subcellular location is the cytoplasm. It is found in the cytoskeleton. It localises to the microtubule organizing center. The protein localises to the centrosome. The protein resides in the cilium basal body. Functionally, centrosomal protein required for establishing a robust mitotic centrosome architecture that can endure the forces that converge on the centrosomes during spindle formation. Required for stabilizing the expanded pericentriolar material around the centriole. The sequence is that of Centrosomal protein kizuna (kiz) from Xenopus laevis (African clawed frog).